Here is a 105-residue protein sequence, read N- to C-terminus: Nitrogen fixation nifHD1 region GlnB-like protein 1 (105 aa).

This sequence belongs to the P(II) protein family.

In terms of biological role, could be involved in the regulation of nitrogen fixation. This chain is Nitrogen fixation nifHD1 region GlnB-like protein 1 (glnBA), found in Methanosarcina barkeri.